The chain runs to 430 residues: Tyrosine--tRNA ligase (430 aa).

An L-tyrosine-binding site is contributed by tyrosine 32. Residues 37-46 carry the 'HIGH' region motif; that stretch reads PTADSLHIGH. Residues tyrosine 172 and glutamine 176 each contribute to the L-tyrosine site. The 'KMSKS' region signature appears at 232–236; sequence KFGKT. Lysine 235 contributes to the ATP binding site. Residues 362 to 430 form the S4 RNA-binding domain; it reads ISLVDLLADA…KKSYYLIIVE (69 aa).

It belongs to the class-I aminoacyl-tRNA synthetase family. TyrS type 1 subfamily. Homodimer.

The protein localises to the cytoplasm. The enzyme catalyses tRNA(Tyr) + L-tyrosine + ATP = L-tyrosyl-tRNA(Tyr) + AMP + diphosphate + H(+). Its function is as follows. Catalyzes the attachment of tyrosine to tRNA(Tyr) in a two-step reaction: tyrosine is first activated by ATP to form Tyr-AMP and then transferred to the acceptor end of tRNA(Tyr). In Porphyromonas gingivalis (strain ATCC 33277 / DSM 20709 / CIP 103683 / JCM 12257 / NCTC 11834 / 2561), this protein is Tyrosine--tRNA ligase.